Here is a 520-residue protein sequence, read N- to C-terminus: Beta-galactoside-specific lectin 4 (520 aa).

Asn107 carries N-linked (GlcNAc...) asparagine glycosylation. Glu159 is a catalytic residue. A disulfide bridge links Cys240 with Cys266. A propeptide spans 241-265 (GERPSSSDVRYWPLVIRPVIADDVT) (connecting peptide). The 128-residue stretch at 269-396 (SEPTVRIVGR…YTLGQGWLAG (128 aa)) folds into the Ricin B-type lectin 1 domain. Position 284–286 (284–286 (DVR)) interacts with D-galactose. Asn322 carries an N-linked (GlcNAc...) asparagine glycan. Residues Cys325 and Cys342 are joined by a disulfide bond. N-linked (GlcNAc...) asparagine glycosylation is found at Asn357 and Asn397. Residues 400-520 (APREVTIYGF…KPNQMWLPVP (121 aa)) form the Ricin B-type lectin 2 domain. 2 disulfide bridges follow: Cys413-Cys426 and Cys451-Cys467. 494–496 (DVA) serves as a coordination point for D-galactose.

It belongs to the ribosome-inactivating protein family. Type 2 RIP subfamily. Disulfide-linked dimer of A and B chains.

The catalysed reaction is Endohydrolysis of the N-glycosidic bond at one specific adenosine on the 28S rRNA.. The A chain is responsible for inhibiting protein synthesis through the catalytic inactivation of 60S ribosomal subunits by removing adenine from position 4,324 of 28S rRNA. The B chain binds to cell receptors and probably facilitates the entry into the cell of the A chain; B chains are also responsible for cell agglutination (lectin activity). Inhibits growth of the human tumor cell line Molt4. This is Beta-galactoside-specific lectin 4 from Viscum album (European mistletoe).